Consider the following 103-residue polypeptide: Isocitrate dehydrogenase [NAD] subunit beta, mitochondrial (103 aa).

This sequence belongs to the isocitrate and isopropylmalate dehydrogenases family. In terms of assembly, heterooligomer of subunits alpha (IDH3A), beta (IDH3B), and gamma (IDH3G) in the apparent ratio of 2:1:1. The heterodimer containing one IDH3A and one IDH3B subunit and the heterodimer containing one IDH3A and one IDH3G subunit assemble into a heterotetramer (which contains two subunits of IDH3A, one of IDH3B and one of IDH3G) and further into the heterooctamer.

Its subcellular location is the mitochondrion. The heterotetramer and the heterodimer composed of IDH3A and IDH3G subunits can be allosterically activated by citrate (CIT) or/and ADP, and the two activators can act independently or synergistically. The heterodimer composed of IDH3A and IDH3B subunits cannot be allosterically regulated and the allosteric regulation of the heterotetramer is through the IDH3G subunit and not the IDH3B subunit. The IDH3G subunit contains the allosteric site which consists of a CIT-binding site and an ADP-binding site, and the binding of CIT and ADP causes conformational changes at the allosteric site which are transmitted to the active site in the catalytic subunit (IDH3A) through a cascade of conformational changes at the heterodimer interface, leading to stabilization of the isocitrate-binding at the active site and thus activation of the enzyme. ATP can activate the heterotetramer and the heterodimer composed of IDH3A and IDH3G subunits at low concentrations but inhibits their activities at high concentrations, whereas ATP exhibits only inhibitory effect on the heterodimer composed of IDH3A and IDH3B subunits. Its function is as follows. Plays a structural role to facilitate the assembly and ensure the full activity of the enzyme catalyzing the decarboxylation of isocitrate (ICT) into alpha-ketoglutarate. The heterodimer composed of the alpha (IDH3A) and beta (IDH3B) subunits and the heterodimer composed of the alpha (IDH3A) and gamma (IDH3G) subunits, have considerable basal activity but the full activity of the heterotetramer (containing two subunits of IDH3A, one of IDH3B and one of IDH3G) requires the assembly and cooperative function of both heterodimers. In Sus scrofa (Pig), this protein is Isocitrate dehydrogenase [NAD] subunit beta, mitochondrial (IDH3B).